The primary structure comprises 127 residues: Stationary phase protein 3 (127 aa).

Transmembrane regions (helical) follow at residues 29–49 (LFLF…FYVI) and 63–83 (ANSI…CFFL). Asn86 carries N-linked (GlcNAc...) asparagine glycosylation.

It is found in the membrane. Functionally, required for survival during stationary phase. The protein is Stationary phase protein 3 (SPG3) of Saccharomyces cerevisiae (strain ATCC 204508 / S288c) (Baker's yeast).